Reading from the N-terminus, the 507-residue chain is Xylose import ATP-binding protein XylG (507 aa).

ABC transporter domains lie at 5 to 242 (LKMT…VGRE) and 259 to 504 (LEVK…LSEK). An ATP-binding site is contributed by 37 to 44 (GENGSGKS).

Belongs to the ABC transporter superfamily. Xylose importer (TC 3.A.1.2.4) family. In terms of assembly, the complex is composed of two ATP-binding proteins (XylG), two transmembrane proteins (XylH) and a solute-binding protein (XylF).

The protein resides in the cell inner membrane. The enzyme catalyses D-xylose(out) + ATP + H2O = D-xylose(in) + ADP + phosphate + H(+). Functionally, part of the ABC transporter complex XylFGH involved in xylose import. Responsible for energy coupling to the transport system. The chain is Xylose import ATP-binding protein XylG from Photobacterium profundum (strain SS9).